A 116-amino-acid chain; its full sequence is S-adenosylmethionine decarboxylase proenzyme (116 aa).

Catalysis depends on Ser63, which acts as the Schiff-base intermediate with substrate; via pyruvic acid. Ser63 is subject to Pyruvic acid (Ser); by autocatalysis. The active-site Proton acceptor; for processing activity is the His68. The Proton donor; for catalytic activity role is filled by Cys83.

The protein belongs to the prokaryotic AdoMetDC family. Type 1 subfamily. In terms of assembly, heterotetramer of two alpha and two beta chains arranged as a dimer of alpha/beta heterodimers. It depends on pyruvate as a cofactor. In terms of processing, is synthesized initially as an inactive proenzyme. Formation of the active enzyme involves a self-maturation process in which the active site pyruvoyl group is generated from an internal serine residue via an autocatalytic post-translational modification. Two non-identical subunits are generated from the proenzyme in this reaction, and the pyruvate is formed at the N-terminus of the alpha chain, which is derived from the carboxyl end of the proenzyme. The post-translation cleavage follows an unusual pathway, termed non-hydrolytic serinolysis, in which the side chain hydroxyl group of the serine supplies its oxygen atom to form the C-terminus of the beta chain, while the remainder of the serine residue undergoes an oxidative deamination to produce ammonia and the pyruvoyl group blocking the N-terminus of the alpha chain.

It catalyses the reaction S-adenosyl-L-methionine + H(+) = S-adenosyl 3-(methylsulfanyl)propylamine + CO2. The protein operates within amine and polyamine biosynthesis; S-adenosylmethioninamine biosynthesis; S-adenosylmethioninamine from S-adenosyl-L-methionine: step 1/1. In terms of biological role, catalyzes the decarboxylation of S-adenosylmethionine to S-adenosylmethioninamine (dcAdoMet), the propylamine donor required for the synthesis of the polyamines spermine and spermidine from the diamine putrescine. The sequence is that of S-adenosylmethionine decarboxylase proenzyme from Clostridium botulinum (strain Okra / Type B1).